A 69-amino-acid chain; its full sequence is Beta-defensin 1 (69 aa).

An N-terminal signal peptide occupies residues 1–21; sequence MKTHYFLLVMLFFLFSQMELG. The propeptide occupies 22-32; the sequence is AGILTSLGRRT. Intrachain disulfides connect Cys37–Cys66, Cys44–Cys59, and Cys49–Cys67.

The protein belongs to the beta-defensin family. Monomer. Homodimer. In terms of tissue distribution, highly expressed in kidney.

Its subcellular location is the secreted. It localises to the membrane. Its function is as follows. Has bactericidal activity. May act as a ligand for C-C chemokine receptor CCR6. Positively regulates the sperm motility and bactericidal activity in a CCR6-dependent manner. Binds to CCR6 and triggers Ca2+ mobilization in the sperm which is important for its motility. The sequence is that of Beta-defensin 1 (Defb1) from Rattus norvegicus (Rat).